Consider the following 309-residue polypeptide: Putative HTH-type transcriptional regulatory protein AF_1787 (309 aa).

The region spanning Ile-131–Ile-185 is the HTH cro/C1-type domain. Positions Val-142–Glu-161 form a DNA-binding region, H-T-H motif.

In Archaeoglobus fulgidus (strain ATCC 49558 / DSM 4304 / JCM 9628 / NBRC 100126 / VC-16), this protein is Putative HTH-type transcriptional regulatory protein AF_1787.